We begin with the raw amino-acid sequence, 183 residues long: MSRKARDPIVLPQGVEVSIQNDEISVKGPKGSLTQVLAKEVEIAVKGNEVFVTPAAHVVDRPGRIQGLYWALIANMVKGVHTGFEKRLEMIGVGFRAAVQGSLLDLSIGVSHPTKMPIPTGLEVSVEKNTLISIKGINKQLVGEFATCVRAKRPPEPYKGKGIRYENEYVRRKAGKAAKTGKK.

The protein belongs to the universal ribosomal protein uL6 family. Part of the 50S ribosomal subunit.

This protein binds to the 23S rRNA, and is important in its secondary structure. It is located near the subunit interface in the base of the L7/L12 stalk, and near the tRNA binding site of the peptidyltransferase center. The sequence is that of Large ribosomal subunit protein uL6 from Chlamydia trachomatis serovar A (strain ATCC VR-571B / DSM 19440 / HAR-13).